The primary structure comprises 344 residues: tRNA N6-adenosine threonylcarbamoyltransferase (344 aa).

Fe cation contacts are provided by H112 and H116. Substrate is bound by residues 134–138 (LASGG), D167, G180, and N280. Residue D308 participates in Fe cation binding.

The protein belongs to the KAE1 / TsaD family. Fe(2+) is required as a cofactor.

It is found in the cytoplasm. It catalyses the reaction L-threonylcarbamoyladenylate + adenosine(37) in tRNA = N(6)-L-threonylcarbamoyladenosine(37) in tRNA + AMP + H(+). Functionally, required for the formation of a threonylcarbamoyl group on adenosine at position 37 (t(6)A37) in tRNAs that read codons beginning with adenine. Is involved in the transfer of the threonylcarbamoyl moiety of threonylcarbamoyl-AMP (TC-AMP) to the N6 group of A37, together with TsaE and TsaB. TsaD likely plays a direct catalytic role in this reaction. This chain is tRNA N6-adenosine threonylcarbamoyltransferase, found in Rickettsia conorii (strain ATCC VR-613 / Malish 7).